Consider the following 427-residue polypeptide: Transcriptional enhancer factor TEF-3 (427 aa).

A disordered region spans residues methionine 1–alanine 32. The segment covering serine 7 to serine 21 has biased composition (low complexity). Positions aspartate 29–glutamate 105 form a DNA-binding region, TEA. The Nuclear localization signal signature appears at isoleucine 78–histidine 94. The interval glutamine 163–proline 206 is disordered. The segment covering glycine 194–proline 205 has biased composition (pro residues).

As to quaternary structure, interacts with WWTR1/TAZ. Interacts with YAP1. In terms of tissue distribution, preferentially expressed in lung and in skeletal muscle.

Its subcellular location is the nucleus. In terms of biological role, transcription factor which plays a key role in the Hippo signaling pathway, a pathway involved in organ size control and tumor suppression by restricting proliferation and promoting apoptosis. The core of this pathway is composed of a kinase cascade wherein MST1/MST2, in complex with its regulatory protein SAV1, phosphorylates and activates LATS1/2 in complex with its regulatory protein MOB1, which in turn phosphorylates and inactivates YAP1 oncoprotein and WWTR1/TAZ. Acts by mediating gene expression of YAP1 and WWTR1/TAZ, thereby regulating cell proliferation, migration and epithelial mesenchymal transition (EMT) induction. Binds specifically and non-cooperatively to the Sph and GT-IIC 'enhansons' (5'-GTGGAATGT-3') and activates transcription. Binds to the M-CAT motif. Might play a role in the embryonic development of skeletal muscle. In Mus musculus (Mouse), this protein is Transcriptional enhancer factor TEF-3 (Tead4).